Here is a 325-residue protein sequence, read N- to C-terminus: TNFAIP3-interacting protein 3 (325 aa).

Disordered stretches follow at residues methionine 1–lysine 30 and arginine 84–glutamate 129. Basic and acidic residues predominate over residues serine 17–threonine 28. The stretch at serine 27–cysteine 265 forms a coiled coil. A ubiquitin-binding domain (UBD) region spans residues histidine 190–alanine 248.

Interacts with TNFAIP3. Interacts with polyubiquitin. Highly expressed in lung, lymph node, thymus and fetal liver. Expressed at lower levels in bone marrow, brain, kidney, spleen, leukocytes and tonsils. Could be detected in heart, salivary gland, adrenal gland, pancreas, ovary and fetal brain. High levels detected in liver, colon, small intestine, muscle, stomach, testis, placenta, thyroid, uterus, prostate, skin and PBL.

Binds to zinc finger protein TNFAIP3 and inhibits NF-kappa-B activation induced by tumor necrosis factor, Toll-like receptor 4 (TLR4), interleukin-1 and 12-O-tetradecanoylphorbol-13-acetate. Overexpression inhibits NF-kappa-B-dependent gene expression in response to lipopolysaccharide at a level downstream of TRAF6 and upstream of IKBKB. NF-kappa-B inhibition is independent of TNFAIP3 binding. This is TNFAIP3-interacting protein 3 from Homo sapiens (Human).